Here is a 154-residue protein sequence, read N- to C-terminus: Deoxyuridine 5'-triphosphate nucleotidohydrolase (154 aa).

Substrate-binding positions include 64–66 (RSG), asparagine 77, 81–83 (TID), and lysine 91.

Belongs to the dUTPase family. In terms of assembly, homotrimer. It depends on Mg(2+) as a cofactor.

It carries out the reaction dUTP + H2O = dUMP + diphosphate + H(+). The protein operates within pyrimidine metabolism; dUMP biosynthesis; dUMP from dCTP (dUTP route): step 2/2. This enzyme is involved in nucleotide metabolism: it produces dUMP, the immediate precursor of thymidine nucleotides and it decreases the intracellular concentration of dUTP so that uracil cannot be incorporated into DNA. This chain is Deoxyuridine 5'-triphosphate nucleotidohydrolase, found in Mycobacterium marinum (strain ATCC BAA-535 / M).